The following is a 732-amino-acid chain: Guanylate cyclase soluble subunit alpha-2 (732 aa).

The segment at 1–58 is disordered; the sequence is MSRRKISSESFSSLGSDYLETSPEEEGECPLSRLCWNGSRSPPGPLEPSPAAAAAAAA. Over residues 49 to 58 the composition is skewed to low complexity; that stretch reads SPAAAAAAAA. The region spanning 521 to 648 is the Guanylate cyclase domain; the sequence is TMLFSDIVGF…NNVTLASKFE (128 aa).

Belongs to the adenylyl cyclase class-4/guanylyl cyclase family. In terms of assembly, heterodimer of an alpha and a beta chain. In terms of tissue distribution, isoform 1 is expressed in fetal brain, liver, colon, endothelium and testis. Isoform 2 is expressed only in liver, colon and endothelium.

The protein resides in the cytoplasm. The enzyme catalyses GTP = 3',5'-cyclic GMP + diphosphate. Its activity is regulated as follows. Activated by nitric oxide in the presence of magnesium or manganese ions. Its function is as follows. Has guanylyl cyclase on binding to the beta-1 subunit. In terms of biological role, isoform 2 acts as a negative regulator of guanylyl cyclase activity as it forms non-functional heterodimers with the beta subunits. The sequence is that of Guanylate cyclase soluble subunit alpha-2 (GUCY1A2) from Homo sapiens (Human).